A 238-amino-acid chain; its full sequence is U2 small nuclear ribonucleoprotein A' (238 aa).

LRR repeat units follow at residues 53–74, 75–95, and 97–118; these read PTHI…SRRD, DIHT…RLLP, and NVQN…QRLR. Positions 132-170 constitute an LRRCT domain; it reads NQVCHLANYREHVLRLVPHLETLDFQNVTAEERKSAMSF. The disordered stretch occupies residues 167-189; it reads AMSFPRQADGDTLGPVNTAIRDN.

This sequence belongs to the U2 small nuclear ribonucleoprotein A family. Belongs to the CWC complex (or CEF1-associated complex), a spliceosome sub-complex reminiscent of a late-stage spliceosome composed of the U2, U5 and U6 snRNAs and at least BUD13, BUD31, BRR2, CDC40, CEF1, CLF1, CUS1, CWC2, CWC15, CWC21, CWC22, CWC23, CWC24, CWC25, CWC27, ECM2, HSH155, IST3, ISY1, LEA1, MSL1, NTC20, PRP8, PRP9, PRP11, PRP19, PRP21, PRP22, PRP45, PRP46, SLU7, SMB1, SMD1, SMD2, SMD3, SMX2, SMX3, SNT309, SNU114, SPP2, SYF1, SYF2, RSE1 and YJU2. Interacts with MSL1.

It is found in the nucleus. Involved in pre-mRNA splicing. Associates to U2 snRNA in a MSL1 dependent manner and is required for normal accumulation of U2 snRNA. Required for the spliceosome assembly and the efficient addition of U2 snRNP onto the pre-mRNA. The polypeptide is U2 small nuclear ribonucleoprotein A' (LEA1) (Saccharomyces cerevisiae (strain ATCC 204508 / S288c) (Baker's yeast)).